We begin with the raw amino-acid sequence, 365 residues long: 3-dehydroquinate synthase (365 aa).

NAD(+) is bound by residues 106–110, 130–131, K142, K151, and 169–172; these read GVIGD, TT, and FFAT. E184, H247, and H264 together coordinate Zn(2+).

It belongs to the sugar phosphate cyclases superfamily. Dehydroquinate synthase family. Requires Co(2+) as cofactor. It depends on Zn(2+) as a cofactor. NAD(+) serves as cofactor.

The protein localises to the cytoplasm. The catalysed reaction is 7-phospho-2-dehydro-3-deoxy-D-arabino-heptonate = 3-dehydroquinate + phosphate. It functions in the pathway metabolic intermediate biosynthesis; chorismate biosynthesis; chorismate from D-erythrose 4-phosphate and phosphoenolpyruvate: step 2/7. Functionally, catalyzes the conversion of 3-deoxy-D-arabino-heptulosonate 7-phosphate (DAHP) to dehydroquinate (DHQ). This chain is 3-dehydroquinate synthase, found in Listeria monocytogenes serotype 4b (strain CLIP80459).